The sequence spans 208 residues: uncharacterized protein (208 aa).

An N-terminal signal peptide occupies residues 1–16 (MTRVALLTTGRELSQA). Disordered stretches follow at residues 1-95 (MTRV…VRGQ) and 145-176 (RVTK…SAAD). The segment covering 16 to 25 (AAPPARARTP) has biased composition (low complexity). The span at 32–43 (RGERPDDGGHAP) shows a compositional bias: basic and acidic residues. The span at 44 to 54 (HRDRRVNQRRR) shows a compositional bias: basic residues. Over residues 55–95 (QVGDRRAQRGVDEHPWRRPDERPNDHLPQRNSERPEGVRGQ) the composition is skewed to basic and acidic residues. 2 stretches are compositionally biased toward polar residues: residues 148-158 (KVSSSGPNSTP) and 167-176 (GTNNAPSAAD).

This is an uncharacterized protein from Mycobacterium tuberculosis (strain CDC 1551 / Oshkosh).